We begin with the raw amino-acid sequence, 260 residues long: Indole-3-glycerol phosphate synthase (260 aa).

Belongs to the TrpC family.

It catalyses the reaction 1-(2-carboxyphenylamino)-1-deoxy-D-ribulose 5-phosphate + H(+) = (1S,2R)-1-C-(indol-3-yl)glycerol 3-phosphate + CO2 + H2O. It participates in amino-acid biosynthesis; L-tryptophan biosynthesis; L-tryptophan from chorismate: step 4/5. The polypeptide is Indole-3-glycerol phosphate synthase (Neisseria meningitidis serogroup B (strain ATCC BAA-335 / MC58)).